The sequence spans 862 residues: DNA mismatch repair protein MutS (862 aa).

604–611 (GPNMAGKS) contributes to the ATP binding site.

Belongs to the DNA mismatch repair MutS family.

Its function is as follows. This protein is involved in the repair of mismatches in DNA. It is possible that it carries out the mismatch recognition step. This protein has a weak ATPase activity. This Brevibacillus brevis (strain 47 / JCM 6285 / NBRC 100599) protein is DNA mismatch repair protein MutS.